A 94-amino-acid polypeptide reads, in one-letter code: Co-chaperonin GroES (94 aa).

Belongs to the GroES chaperonin family. In terms of assembly, heptamer of 7 subunits arranged in a ring. Interacts with the chaperonin GroEL.

The protein localises to the cytoplasm. Together with the chaperonin GroEL, plays an essential role in assisting protein folding. The GroEL-GroES system forms a nano-cage that allows encapsulation of the non-native substrate proteins and provides a physical environment optimized to promote and accelerate protein folding. GroES binds to the apical surface of the GroEL ring, thereby capping the opening of the GroEL channel. The chain is Co-chaperonin GroES from Bacillus licheniformis (strain ATCC 14580 / DSM 13 / JCM 2505 / CCUG 7422 / NBRC 12200 / NCIMB 9375 / NCTC 10341 / NRRL NRS-1264 / Gibson 46).